The following is a 510-amino-acid chain: RanBP-type and C3HC4-type zinc finger-containing protein 1 (510 aa).

Methionine 1 is modified (N-acetylmethionine). The segment at 1 to 220 (MDEKTKKAEE…PGCEMCCRAR (220 aa)) is interaction with IRF3. The interaction with TAB2 stretch occupies residues 1-270 (MDEKTKKAEE…NYLQHVQLDQ (270 aa)). Serine 50 carries the phosphoserine modification. A Ubiquitin-like domain is found at 55 to 119 (IRLWVSVEDA…DQETLHSHGV (65 aa)). The tract at residues 69 to 131 (VTIWLTVRPD…NGDSAYLYLL (63 aa)) is interaction with RNF31. A disordered region spans residues 160–192 (LTLQPRGPLEPGPPKPGVPQEPGRGQPDAVPEP). Over residues 167–178 (PLEPGPPKPGVP) the composition is skewed to pro residues. A RanBP2-type zinc finger spans residues 193-222 (PPVGWQCPGCTFINKPTRPGCEMCCRARPE). The stretch at 233–261 (DEEERARLAGEEEALRQYQQRKQQQQEGN) forms a coiled coil. Residues 278 to 506 (EPAECPVCYS…VNGIPCHPSC (229 aa)) are TRIAD supradomain. Cysteine 282, cysteine 285, cysteine 300, histidine 302, cysteine 305, cysteine 308, and cysteine 323 together coordinate Zn(2+). The RING-type 1 zinc finger occupies 282-332 (CPVCYSVLAPGEAVVLRECLHTFCRECLQGTIRNSQEAEVSCPFIDNTYSC). Tyrosine 330 bears the Phosphotyrosine mark. The Zn(2+) site is built by cysteine 332, cysteine 371, cysteine 376, cysteine 391, cysteine 394, cysteine 399, cysteine 402, histidine 406, cysteine 411, cysteine 447, and cysteine 450. An IBR-type zinc finger spans residues 351–411 (QRFLDLGISI…CKAIHEQMNC (61 aa)). Residues 447 to 476 (CPQCQIVVQKKDGCDWIRCTVCHTEICWVT) form an RING-type 2; atypical zinc finger. Cysteine 460 is a catalytic residue. Residues cysteine 465 and cysteine 468 each contribute to the Zn(2+) site.

The protein belongs to the RBR family. Component of the LUBAC complex (linear ubiquitin chain assembly complex) which consists of SHARPIN, RBCK1 and RNF31. LUBAC has a MW of approximately 600 kDa suggesting a heteromultimeric assembly of its subunits. Interacts with beta-I-type (PRKCB1) and zeta-type protein kinase C (PRKCZ). Interacts with UBE2L3. Interacts with PRKCH. Associates with the TNF-R1 signaling complex (TNF-RSC) in a stimulation-dependent manner. Interacts with EYA1, TAB2, TAB3, MAP3K7 TRAF6 and RIPK1. Interacts with IRF3. In terms of assembly, interacts with IREB2 only in iron-rich conditions. As to quaternary structure, (Microbial infection) Interacts with hepatitis B virus/HBV protein HBx; this interaction is required to activate transcription of the viral genome. Post-translationally, auto-ubiquitinated. Auto-ubiquitination leads to degradation by the proteasome. Phosphorylated. In vitro, phosphorylation inhibits auto-ubiquitination activity. In terms of processing, (Microbial infection) Ubiquitinated by S.flexneri E3 ubiquitin-protein ligases IpaH1.4 and IpaH2.5, leading to its degradation by the proteasome, thereby preventing formation of the bacterial ubiquitin coat and activation of innate immunity.

The enzyme catalyses [E2 ubiquitin-conjugating enzyme]-S-ubiquitinyl-L-cysteine + [acceptor protein]-L-lysine = [E2 ubiquitin-conjugating enzyme]-L-cysteine + [acceptor protein]-N(6)-ubiquitinyl-L-lysine.. Its pathway is protein modification; protein ubiquitination. E3 ubiquitin-protein ligase, which accepts ubiquitin from specific E2 ubiquitin-conjugating enzymes, such as UBE2L3/UBCM4, and then transfers it to substrates. Functions as an E3 ligase for oxidized IREB2 and both heme and oxygen are necessary for IREB2 ubiquitination. Promotes ubiquitination of TAB2 and IRF3 and their degradation by the proteasome. Component of the LUBAC complex which conjugates linear ('Met-1'-linked) polyubiquitin chains to substrates and plays a key role in NF-kappa-B activation and regulation of inflammation. LUBAC conjugates linear polyubiquitin to IKBKG and RIPK1 and is involved in activation of the canonical NF-kappa-B and the JNK signaling pathways. Linear ubiquitination mediated by the LUBAC complex interferes with TNF-induced cell death and thereby prevents inflammation. LUBAC is recruited to the TNF-R1 signaling complex (TNF-RSC) following polyubiquitination of TNF-RSC components by BIRC2 and/or BIRC3 and to conjugate linear polyubiquitin to IKBKG and possibly other components contributing to the stability of the complex. The LUBAC complex is also involved in innate immunity by conjugating linear polyubiquitin chains at the surface of bacteria invading the cytosol to form the ubiquitin coat surrounding bacteria. LUBAC is not able to initiate formation of the bacterial ubiquitin coat, and can only promote formation of linear polyubiquitins on pre-existing ubiquitin. The bacterial ubiquitin coat acts as an 'eat-me' signal for xenophagy and promotes NF-kappa-B activation. Together with OTULIN, the LUBAC complex regulates the canonical Wnt signaling during angiogenesis. Binds polyubiquitin of different linkage types. The chain is RanBP-type and C3HC4-type zinc finger-containing protein 1 (RBCK1) from Homo sapiens (Human).